The sequence spans 513 residues: Meiotically up-regulated gene 133 protein (513 aa).

It belongs to the UPF0300 family.

It localises to the golgi apparatus. Its subcellular location is the vacuole membrane. In terms of biological role, has a role in meiosis. The chain is Meiotically up-regulated gene 133 protein (mug133) from Schizosaccharomyces pombe (strain 972 / ATCC 24843) (Fission yeast).